We begin with the raw amino-acid sequence, 813 residues long: Leucine--tRNA ligase (813 aa).

The short motif at 39 to 49 (PYPSGRIHMGH) is the 'HIGH' region element. A 'KMSKS' region motif is present at residues 582–586 (KMSKS). K585 provides a ligand contact to ATP.

Belongs to the class-I aminoacyl-tRNA synthetase family.

The protein resides in the cytoplasm. It catalyses the reaction tRNA(Leu) + L-leucine + ATP = L-leucyl-tRNA(Leu) + AMP + diphosphate. In Campylobacter hominis (strain ATCC BAA-381 / DSM 21671 / CCUG 45161 / LMG 19568 / NCTC 13146 / CH001A), this protein is Leucine--tRNA ligase.